Reading from the N-terminus, the 112-residue chain is Nitrogen regulatory protein P-II (112 aa).

The residue at position 49 (serine 49) is a Phosphoserine. An O-UMP-tyrosine modification is found at tyrosine 51.

The protein belongs to the P(II) protein family. Homotrimer. In terms of processing, phosphorylation dependent on the nitrogen source and spectral light quality.

Its function is as follows. P-II indirectly controls the transcription of the GS gene (glnA). P-II prevents NR-II-catalyzed conversion of NR-I to NR-I-phosphate, the transcriptional activator of glnA. When P-II is phosphorylated, these events are reversed. In nitrogen-limiting conditions, when the ratio of Gln to 2-ketoglutarate decreases, P-II is phosphorylated which allows the deadenylation of glutamine synthetase (GS), thus activating the enzyme. This is Nitrogen regulatory protein P-II (glnB) from Microchaete diplosiphon (Fremyella diplosiphon).